Consider the following 202-residue polypeptide: Arenicin-1 (202 aa).

Positions 1-25 (MTSTQSVAVCATLILAIFCVNDIHC) are cleaved as a signal peptide. Residues 26–181 (DPIAEARAAA…SGDNNEPEKR (156 aa)) constitute a propeptide that is removed on maturation. One can recognise a BRICHOS domain in the interval 73–168 (GDGVEGSVMV…ACQGKSVYWL (96 aa)). 2 disulfides stabilise this stretch: C100/C160 and C184/C201.

In terms of biological role, has antimicrobial activity against the Gram-negative bacteria E.coli and P.mirabilis, the Gram-positive bacterium L.monocytogenes and the yeast C.albicans. In Arenicola marina (Lugworm), this protein is Arenicin-1.